Reading from the N-terminus, the 709-residue chain is DCC-interacting protein 13-alpha (709 aa).

Residues 1–428 (MPGIDKLPIE…RPPTARTSSS (428 aa)) form a required for RAB5A binding region. The region spanning 3–268 (GIDKLPIEET…DPLYVPDPDP (266 aa)) is the BAR domain. Residues 215–259 (SENLNEQLEEFLANIGTSVQNVRREMDSDIETMQQTIEDLEVASD) adopt a coiled-coil conformation. The region spanning 277–375 (LTRKAGYLNA…WICTINNISK (99 aa)) is the PH domain. 3 disordered regions span residues 397-434 (AVTPSPSFQQRHESLRPAAGQSRPPTARTSSSGSLGSE), 467-491 (GQAKAFGQGGRRTNPFGESGGSTKS), and 645-709 (VKEK…ESEA). Position 399 is a phosphothreonine (T399). Phosphoserine is present on S401. The F&amp;H signature appears at 403-414 (SFQQRHESLRPA). S410 is subject to Phosphoserine; by PKA. The PID domain maps to 496 to 656 (SILHQLFIVR…EKQQKELNKQ (161 aa)). Positions 621–673 (LAKQIALHAELDRRASEKQKEIERVKEKQQKELNKQKQIEKDLEEQSRLIAAS) form a coiled coil. Basic and acidic residues predominate over residues 645-667 (VKEKQQKELNKQKQIEKDLEEQS). The span at 674–693 (SRPNQASSEGQFVVLSSSQS) shows a compositional bias: polar residues. 2 positions are modified to phosphoserine: S693 and S696. Over residues 700-709 (EGGKKRESEA) the composition is skewed to basic and acidic residues.

Homodimer. Binds RAB5A/Rab5 through an N-terminal domain. This interaction is essential for its recruitment to endosomal membranes as well as its role in cell proliferation. Binds DCC and the catalytic domain of the inactive form of AKT2 through its PID domain. Binds PIK3CA and subunits of the NuRD/MeCP1 complex. Interacts with OCRL and INPP5B. Interacts with NTRK2. Interacts with APPL2; interaction is independent of follicle stimulating hormone stimulation; interaction is decreased by adiponectin in a time-dependent manner. Forms a complex with APPL2 and RUVBL2. Forms a complex comprising APPL2, RUVBL2, CTNNB1, HDAC1 and HDAC2; interaction reduces interaction between CTNNB1, HDAC1, HDAC2 and RUVBL2 leading to the decrease of deacetylase activity of this complex; affects the recruitment of repressive complexes to the Wnt target genes. Interacts with ANXA2. Interacts with TGFBR1; interaction is TGF beta dependent; mediates trafficking of the TGFBR1 from the endosomes to the nucleus via microtubules in a TRAF6-dependent manner. Interacts with PRKCZ. Interacts with PIK3R1 and APPL2. Interacts with ADIPOR1; ADIPOQ enhances this interaction; inhibites adiponectin-stimulated binding of APPL2 to ADIPOR1. In terms of processing, phosphorylation at Ser-410 by PKA severely impairs binding to OCRL. In terms of tissue distribution, high levels in heart, ovary, pancreas and skeletal muscle.

The protein localises to the early endosome membrane. It is found in the nucleus. It localises to the cytoplasm. The protein resides in the endosome. Its subcellular location is the cell projection. The protein localises to the ruffle. It is found in the cytoplasmic vesicle. It localises to the phagosome. In terms of biological role, multifunctional adapter protein that binds to various membrane receptors, nuclear factors and signaling proteins to regulate many processes, such as cell proliferation, immune response, endosomal trafficking and cell metabolism. Regulates signaling pathway leading to cell proliferation through interaction with RAB5A and subunits of the NuRD/MeCP1 complex. Functions as a positive regulator of innate immune response via activation of AKT1 signaling pathway by forming a complex with APPL1 and PIK3R1. Inhibits Fc-gamma receptor-mediated phagocytosis through PI3K/Akt signaling in macrophages. Regulates TLR4 signaling in activated macrophages. Involved in trafficking of the TGFBR1 from the endosomes to the nucleus via microtubules in a TRAF6-dependent manner. Plays a role in cell metabolism by regulating adiponecting and insulin signaling pathways. Required for fibroblast migration through HGF cell signaling. Positive regulator of beta-catenin/TCF-dependent transcription through direct interaction with RUVBL2/reptin resulting in the relief of RUVBL2-mediated repression of beta-catenin/TCF target genes by modulating the interactions within the beta-catenin-reptin-HDAC complex. This Homo sapiens (Human) protein is DCC-interacting protein 13-alpha.